Consider the following 262-residue polypeptide: Small ribosomal subunit protein eS4C (262 aa).

In terms of domain architecture, S4 RNA-binding spans 42–105 (LPLIVFLRNR…GEHFRLVYDI (64 aa)). Position 194 is a phosphothreonine (T194).

This sequence belongs to the eukaryotic ribosomal protein eS4 family. In terms of assembly, component of the small ribosomal subunit (SSU). Mature yeast ribosomes consist of a small (40S) and a large (60S) subunit. The 40S small subunit contains 1 molecule of ribosomal RNA (18S rRNA) and at least 33 different proteins. The large 60S subunit contains 3 rRNA molecules (25S, 5.8S and 5S rRNA) and at least 46 different proteins.

The protein resides in the cytoplasm. Its function is as follows. Component of the ribosome, a large ribonucleoprotein complex responsible for the synthesis of proteins in the cell. The small ribosomal subunit (SSU) binds messenger RNAs (mRNAs) and translates the encoded message by selecting cognate aminoacyl-transfer RNA (tRNA) molecules. The large subunit (LSU) contains the ribosomal catalytic site termed the peptidyl transferase center (PTC), which catalyzes the formation of peptide bonds, thereby polymerizing the amino acids delivered by tRNAs into a polypeptide chain. The nascent polypeptides leave the ribosome through a tunnel in the LSU and interact with protein factors that function in enzymatic processing, targeting, and the membrane insertion of nascent chains at the exit of the ribosomal tunnel. The polypeptide is Small ribosomal subunit protein eS4C (rps403) (Schizosaccharomyces pombe (strain 972 / ATCC 24843) (Fission yeast)).